Consider the following 364-residue polypeptide: Phosphate acyltransferase (364 aa).

Residues 343 to 364 are disordered; it reads IRTSGRSGGKSKSSAAREDGAA.

This sequence belongs to the PlsX family. Homodimer. Probably interacts with PlsY.

The protein resides in the cytoplasm. The enzyme catalyses a fatty acyl-[ACP] + phosphate = an acyl phosphate + holo-[ACP]. Its pathway is lipid metabolism; phospholipid metabolism. Its function is as follows. Catalyzes the reversible formation of acyl-phosphate (acyl-PO(4)) from acyl-[acyl-carrier-protein] (acyl-ACP). This enzyme utilizes acyl-ACP as fatty acyl donor, but not acyl-CoA. The protein is Phosphate acyltransferase of Novosphingobium aromaticivorans (strain ATCC 700278 / DSM 12444 / CCUG 56034 / CIP 105152 / NBRC 16084 / F199).